The primary structure comprises 205 residues: UPF0056 membrane protein MJ1677 (205 aa).

The next 6 helical transmembrane spans lie at 7-27 (ILAFSSIFSILNPFGAVPVFI), 49-69 (ALAILLAFALFGEWILKFFGI), 70-90 (SLDAFKIAGGILLLLISLDMV), 112-132 (IALMPLATPLLAGPGSITACM), 145-165 (FLVILAILLSLGITYLTLLSA), and 185-205 (GLILTAIAVQMIVNGIRGALL).

It belongs to the UPF0056 (MarC) family.

It is found in the cell membrane. This chain is UPF0056 membrane protein MJ1677, found in Methanocaldococcus jannaschii (strain ATCC 43067 / DSM 2661 / JAL-1 / JCM 10045 / NBRC 100440) (Methanococcus jannaschii).